A 438-amino-acid polypeptide reads, in one-letter code: LIM domain-containing protein C4F6.12 (438 aa).

Disordered regions lie at residues 1–37 (MHSP…NNLV) and 49–78 (TGGR…TIKQ). Residues 24-37 (SPVSTNGSPLNNLV) are compositionally biased toward polar residues. 2 positions are modified to phosphoserine: S67 and S96. LIM zinc-binding domains follow at residues 256 to 316 (KSCH…QFSP), 318 to 375 (CKHC…NKYA), and 376 to 435 (VKCK…SVKF).

The polypeptide is LIM domain-containing protein C4F6.12 (Schizosaccharomyces pombe (strain 972 / ATCC 24843) (Fission yeast)).